The primary structure comprises 672 residues: uncharacterized protein (672 aa).

A compositionally biased stretch (basic and acidic residues) spans 1–10 (MAKSDGDDPL). Positions 1–40 (MAKSDGDDPLRPASPRLRSSRRHSLRYSAYTGGPDPLAPP) are disordered.

This is an uncharacterized protein from Mycobacterium tuberculosis (strain CDC 1551 / Oshkosh).